A 420-amino-acid polypeptide reads, in one-letter code: UDP-N-acetylglucosamine 1-carboxyvinyltransferase (420 aa).

22–23 (KN) is a binding site for phosphoenolpyruvate. Position 92 (arginine 92) interacts with UDP-N-acetyl-alpha-D-glucosamine. The active-site Proton donor is cysteine 116. The residue at position 116 (cysteine 116) is a 2-(S-cysteinyl)pyruvic acid O-phosphothioketal. Residues 121 to 125 (RPVDQ), aspartate 304, and isoleucine 326 contribute to the UDP-N-acetyl-alpha-D-glucosamine site.

The protein belongs to the EPSP synthase family. MurA subfamily.

The protein localises to the cytoplasm. The enzyme catalyses phosphoenolpyruvate + UDP-N-acetyl-alpha-D-glucosamine = UDP-N-acetyl-3-O-(1-carboxyvinyl)-alpha-D-glucosamine + phosphate. The protein operates within cell wall biogenesis; peptidoglycan biosynthesis. In terms of biological role, cell wall formation. Adds enolpyruvyl to UDP-N-acetylglucosamine. The chain is UDP-N-acetylglucosamine 1-carboxyvinyltransferase from Paraburkholderia phytofirmans (strain DSM 17436 / LMG 22146 / PsJN) (Burkholderia phytofirmans).